The chain runs to 424 residues: Serpin-Z2A (424 aa).

The RCL stretch occupies residues 370–394 (GTEAAASTACTIRLLSMSYPEDFVA).

This sequence belongs to the serpin family.

In terms of biological role, probable serine protease inhibitor. This Oryza sativa subsp. japonica (Rice) protein is Serpin-Z2A.